We begin with the raw amino-acid sequence, 882 residues long: Valine--tRNA ligase (882 aa).

Residues 45-55 (PNVTGSLHIGH) carry the 'HIGH' region motif. Residues 525 to 529 (KFSKS) carry the 'KMSKS' region motif. Residue Lys528 coordinates ATP. Positions 812 to 881 (EGLIDVAKEK…VLKKGIQNLA (70 aa)) form a coiled coil.

The protein belongs to the class-I aminoacyl-tRNA synthetase family. ValS type 1 subfamily. Monomer.

It localises to the cytoplasm. The catalysed reaction is tRNA(Val) + L-valine + ATP = L-valyl-tRNA(Val) + AMP + diphosphate. Its function is as follows. Catalyzes the attachment of valine to tRNA(Val). As ValRS can inadvertently accommodate and process structurally similar amino acids such as threonine, to avoid such errors, it has a 'posttransfer' editing activity that hydrolyzes mischarged Thr-tRNA(Val) in a tRNA-dependent manner. The protein is Valine--tRNA ligase of Leptospira interrogans serogroup Icterohaemorrhagiae serovar copenhageni (strain Fiocruz L1-130).